Reading from the N-terminus, the 128-residue chain is Cystatin-12 (128 aa).

The first 21 residues, 1-21, serve as a signal peptide directing secretion; the sequence is MLWKSVLPVALIVLGIHDCSF. 2 cysteine pairs are disulfide-bonded: Cys82–Cys92 and Cys105–Cys125. Asn122 carries N-linked (GlcNAc...) asparagine glycosylation.

It belongs to the cystatin family.

It is found in the secreted. Functionally, may play a specialized role in spermatogenesis. The polypeptide is Cystatin-12 (Cst12) (Rattus norvegicus (Rat)).